Consider the following 689-residue polypeptide: Armadillo-like helical domain-containing protein 3 (689 aa).

A helical membrane pass occupies residues 520–538 (IFQLALQVVNLFNMFITYG).

The protein belongs to the ARMH3 family.

It is found in the golgi apparatus membrane. The protein localises to the cytoplasm. May be involved in Golgi maintenance and protein secretion. This Danio rerio (Zebrafish) protein is Armadillo-like helical domain-containing protein 3.